A 101-amino-acid polypeptide reads, in one-letter code: Trp operon repressor homolog (101 aa).

Residues Q59–T82 mediate DNA binding.

The protein belongs to the TrpR family. In terms of assembly, homodimer.

The protein localises to the cytoplasm. This protein is an aporepressor. When complexed with L-tryptophan it binds the operator region of the trp operon and prevents the initiation of transcription. This chain is Trp operon repressor homolog, found in Haemophilus influenzae (strain 86-028NP).